The chain runs to 350 residues: Chorismate synthase (350 aa).

The NADP(+) site is built by Arg-39 and Arg-45. Residues 119-121 (RSS), 213-214 (QA), Gly-258, 273-277 (KPIPT), and Arg-299 contribute to the FMN site.

Belongs to the chorismate synthase family. As to quaternary structure, homotetramer. It depends on FMNH2 as a cofactor.

It carries out the reaction 5-O-(1-carboxyvinyl)-3-phosphoshikimate = chorismate + phosphate. It functions in the pathway metabolic intermediate biosynthesis; chorismate biosynthesis; chorismate from D-erythrose 4-phosphate and phosphoenolpyruvate: step 7/7. In terms of biological role, catalyzes the anti-1,4-elimination of the C-3 phosphate and the C-6 proR hydrogen from 5-enolpyruvylshikimate-3-phosphate (EPSP) to yield chorismate, which is the branch point compound that serves as the starting substrate for the three terminal pathways of aromatic amino acid biosynthesis. This reaction introduces a second double bond into the aromatic ring system. The sequence is that of Chorismate synthase from Thermoanaerobacter pseudethanolicus (strain ATCC 33223 / 39E) (Clostridium thermohydrosulfuricum).